Consider the following 154-residue polypeptide: Endoribonuclease YbeY (154 aa).

Residues H113, H117, and H123 each contribute to the Zn(2+) site.

This sequence belongs to the endoribonuclease YbeY family. Zn(2+) is required as a cofactor.

The protein localises to the cytoplasm. In terms of biological role, single strand-specific metallo-endoribonuclease involved in late-stage 70S ribosome quality control and in maturation of the 3' terminus of the 16S rRNA. This chain is Endoribonuclease YbeY, found in Ehrlichia chaffeensis (strain ATCC CRL-10679 / Arkansas).